We begin with the raw amino-acid sequence, 127 residues long: Glycine cleavage system H protein (127 aa).

The Lipoyl-binding domain maps to 22-104 (AVVIGITHFA…YEGAWMVKVE (83 aa)). Lys-63 is modified (N6-lipoyllysine).

Belongs to the GcvH family. The glycine cleavage system is composed of four proteins: P, T, L and H. It depends on (R)-lipoate as a cofactor.

The glycine cleavage system catalyzes the degradation of glycine. The H protein shuttles the methylamine group of glycine from the P protein to the T protein. Its function is as follows. Is also involved in protein lipoylation via its role as an octanoyl/lipoyl carrier protein intermediate. The polypeptide is Glycine cleavage system H protein (Bacillus mycoides (strain KBAB4) (Bacillus weihenstephanensis)).